We begin with the raw amino-acid sequence, 174 residues long: ATP-dependent protease subunit HslV (174 aa).

Residue T2 is part of the active site. G157, C160, and T163 together coordinate Na(+).

This sequence belongs to the peptidase T1B family. HslV subfamily. A double ring-shaped homohexamer of HslV is capped on each side by a ring-shaped HslU homohexamer. The assembly of the HslU/HslV complex is dependent on binding of ATP.

The protein resides in the cytoplasm. The catalysed reaction is ATP-dependent cleavage of peptide bonds with broad specificity.. Allosterically activated by HslU binding. Its function is as follows. Protease subunit of a proteasome-like degradation complex believed to be a general protein degrading machinery. This chain is ATP-dependent protease subunit HslV, found in Shewanella loihica (strain ATCC BAA-1088 / PV-4).